Here is a 216-residue protein sequence, read N- to C-terminus: Putative holocytochrome-c1 synthase (216 aa).

A disordered region spans residues 1–46; that stretch reads MQPEQLNQEEESKCPVPPEVRDAWLKSHGGKKPSEVHDTPHPTMLP.

This sequence belongs to the cytochrome c-type heme lyase family.

It is found in the mitochondrion inner membrane. The enzyme catalyses holo-[cytochrome c] = apo-[cytochrome c] + heme b. Functionally, lyase that catalyzes the covalent linking of the heme group to the cytochrome C1 apoprotein to produce the mature functional cytochrome. This chain is Putative holocytochrome-c1 synthase, found in Schizosaccharomyces pombe (strain 972 / ATCC 24843) (Fission yeast).